The following is a 256-amino-acid chain: METYVNKLHEGSIYTAAVQYNVIEKDDDPASLTIWVPMFQSSISADMLIKELINVNILVRQISTPKGPSLKIMINSRSAVLAQMPSKFTISANVSLDERSKLAYDITTPCEIKACSLTCLKVKNMLTTVKDLTMKTFNPTHEIIALCEFENIMTSKRVVIPTFLRSINVKAKDLDSLENIATTEFKNAITNAKIIPYAGLVLVITVTDNKGAFKYIKPQSQFIVDLGAYLEKESIYYVTTNWKHTATKFSIKPIED.

The interval 1–110 (METYVNKLHE…KLAYDITTPC (110 aa)) is interaction with M2-1. Residues 110 to 183 (CEIKACSLTC…LDSLENIATT (74 aa)) form a nuclear targeting and binding to host importin KPNB1 region. Positions 194-206 (IIPYAGLVLVITV) match the Nuclear export signal motif. Thr-205 bears the Phosphothreonine mark.

It belongs to the pneumovirinae M protein family. As to quaternary structure, forms dimers. Forms higher-order oligomers. Interacts with glycoprotein G (via N-terminus). Interacts with protein M2-1; this interaction directs the matrix protein localization to cytoplasmic inclusions comprising viral proteins L, N, P, and M2-1 and mediates the matrix protein association with the nucleocapsid. Interacts with host KPNB1; this interaction mediates nuclear import of the matrix protein early during infection. In terms of processing, phosphorylation is important for oligomerization.

The protein localises to the virion. It is found in the host cytoplasm. It localises to the host nucleus. The protein resides in the host cell membrane. Its function is as follows. Plays a crucial role in virus assembly into filaments and budding. Early in infection, localizes in the nucleus where it may inhibit host cell transcription. Later in infection, traffics to the cytoplasm through the action of host CRM1 to associate with inclusion bodies, the site of viral transcription and replication. During virus assembly and budding, acts as a bridge between the nucleocapsid and the lipid bilayer. The sequence is that of Matrix protein (M) from Bos taurus (Bovine).